Reading from the N-terminus, the 1071-residue chain is ATP-dependent helicase/deoxyribonuclease subunit B (1071 aa).

It belongs to the helicase family. AddB/RexB type 2 subfamily. In terms of assembly, heterodimer of AddA and RexB. Mg(2+) serves as cofactor.

Functionally, the heterodimer acts as both an ATP-dependent DNA helicase and an ATP-dependent, dual-direction single-stranded exonuclease. Recognizes the chi site generating a DNA molecule suitable for the initiation of homologous recombination. This subunit has 5' -&gt; 3' nuclease activity but not helicase activity. This chain is ATP-dependent helicase/deoxyribonuclease subunit B, found in Streptococcus pyogenes serotype M18 (strain MGAS8232).